A 186-amino-acid polypeptide reads, in one-letter code: Ribosome-recycling factor (186 aa).

The protein belongs to the RRF family.

It is found in the cytoplasm. In terms of biological role, responsible for the release of ribosomes from messenger RNA at the termination of protein biosynthesis. May increase the efficiency of translation by recycling ribosomes from one round of translation to another. In Methylocella silvestris (strain DSM 15510 / CIP 108128 / LMG 27833 / NCIMB 13906 / BL2), this protein is Ribosome-recycling factor.